Reading from the N-terminus, the 111-residue chain is Resistin-like alpha (111 aa).

An N-terminal signal peptide occupies residues 1–23; that stretch reads MKTATCSLLICVFLLQLMVPVNT. Disulfide bonds link Cys55/Cys108, Cys67/Cys107, Cys76/Cys93, Cys78/Cys95, and Cys82/Cys97.

It belongs to the resistin/FIZZ family. In terms of assembly, monomer. As to expression, highest levels in adipose tissue.

It is found in the secreted. In terms of biological role, probable hormone. Plays a role in pulmonary vascular remodeling. The sequence is that of Resistin-like alpha (Retnla) from Rattus norvegicus (Rat).